The following is a 198-amino-acid chain: Dephospho-CoA kinase (198 aa).

One can recognise a DPCK domain in the interval 3-198 (IVGITGGIGS…LLAKERLELA (196 aa)). ATP is bound at residue 11-16 (GSGKTT).

The protein belongs to the CoaE family.

It localises to the cytoplasm. The enzyme catalyses 3'-dephospho-CoA + ATP = ADP + CoA + H(+). It participates in cofactor biosynthesis; coenzyme A biosynthesis; CoA from (R)-pantothenate: step 5/5. Its function is as follows. Catalyzes the phosphorylation of the 3'-hydroxyl group of dephosphocoenzyme A to form coenzyme A. This is Dephospho-CoA kinase from Dehalococcoides mccartyi (strain ATCC BAA-2266 / KCTC 15142 / 195) (Dehalococcoides ethenogenes (strain 195)).